A 509-amino-acid chain; its full sequence is Cytochrome P450 4X1 (509 aa).

A helical transmembrane segment spans residues 14 to 34 (FYLAFVFCLALGLLQAIKLYL). Cysteine 454 serves as a coordination point for heme.

Belongs to the cytochrome P450 family. The cofactor is heme. In terms of tissue distribution, expressed in brain, heart, kidney and skin and, at lower levels, in skeletal muscle and liver. In the brain, high levels are detected in amygdala and lower levels in globus pallidus and cerebellum. In the heart, very high levels in aorta, but very low levels in other heart regions. Also expressed in breast, prostate and colon.

It localises to the endoplasmic reticulum membrane. The protein resides in the microsome membrane. The catalysed reaction is N-(5Z,8Z,11Z,14Z-eicosatetraenoyl)-ethanolamine + reduced [NADPH--hemoprotein reductase] + O2 = N-(14,15-epoxy-5Z,8Z,11Z-eicosatrienoyl)-ethanolamine + oxidized [NADPH--hemoprotein reductase] + H2O + H(+). Functionally, a cytochrome P450 monooxygenase that selectively catalyzes the epoxidation of the last double bond of the arachidonoyl moiety of anandamide, potentially modulating endocannabinoid signaling. Has no hydroxylase activity toward various fatty acids, steroids and prostaglandins. Mechanistically, uses molecular oxygen inserting one oxygen atom into a substrate, and reducing the second into a water molecule, with two electrons provided by NADPH via cytochrome P450 reductase (CPR; NADPH-ferrihemoprotein reductase). This Homo sapiens (Human) protein is Cytochrome P450 4X1.